Consider the following 131-residue polypeptide: Small ribosomal subunit protein uS11 (131 aa).

The protein belongs to the universal ribosomal protein uS11 family. As to quaternary structure, part of the 30S ribosomal subunit. Interacts with proteins S7 and S18. Binds to IF-3.

In terms of biological role, located on the platform of the 30S subunit, it bridges several disparate RNA helices of the 16S rRNA. Forms part of the Shine-Dalgarno cleft in the 70S ribosome. The sequence is that of Small ribosomal subunit protein uS11 from Geobacter sulfurreducens (strain ATCC 51573 / DSM 12127 / PCA).